The chain runs to 289 residues: MSAMRWPAPAKLNLFLHVNGRRPDGYHELQTLFIFLNHGDWLEFEPLTDTDLLTLSPAIPGVPDEQNLIIRAARLLQARLPSQQGAHIRLEKVLPMGGGIGGGSSDAATTLVALNHLWQAGLSEDELAELGVQLGADVPVFVRGKAAFAEGVGERLQPVELPSAWYLVLKPDCHVATAAVFQDPDLPRDTPKMALHNLLEGEWKNDCELLVKKRHPEVANALGWLLEYAPSRMTGTGACVFAQFEDEVAAREVLAKVPKGWDGFVAKGENISPLFAALQQVSDWGIAKR.

The active site involves K11. 95–105 is a binding site for ATP; sequence PMGGGIGGGSS. The active site involves D137.

It belongs to the GHMP kinase family. IspE subfamily.

It carries out the reaction 4-CDP-2-C-methyl-D-erythritol + ATP = 4-CDP-2-C-methyl-D-erythritol 2-phosphate + ADP + H(+). It participates in isoprenoid biosynthesis; isopentenyl diphosphate biosynthesis via DXP pathway; isopentenyl diphosphate from 1-deoxy-D-xylulose 5-phosphate: step 3/6. Catalyzes the phosphorylation of the position 2 hydroxy group of 4-diphosphocytidyl-2C-methyl-D-erythritol. The sequence is that of 4-diphosphocytidyl-2-C-methyl-D-erythritol kinase from Aeromonas hydrophila subsp. hydrophila (strain ATCC 7966 / DSM 30187 / BCRC 13018 / CCUG 14551 / JCM 1027 / KCTC 2358 / NCIMB 9240 / NCTC 8049).